A 189-amino-acid polypeptide reads, in one-letter code: Shikimate kinase (189 aa).

11–16 (GTGKSA) contributes to the ATP binding site. Ser-15 serves as a coordination point for Mg(2+). Positions 33, 57, and 79 each coordinate substrate. An ATP-binding site is contributed by Arg-117. Residue Arg-135 participates in substrate binding.

The protein belongs to the shikimate kinase family. As to quaternary structure, monomer. It depends on Mg(2+) as a cofactor.

It is found in the cytoplasm. It catalyses the reaction shikimate + ATP = 3-phosphoshikimate + ADP + H(+). It functions in the pathway metabolic intermediate biosynthesis; chorismate biosynthesis; chorismate from D-erythrose 4-phosphate and phosphoenolpyruvate: step 5/7. Functionally, catalyzes the specific phosphorylation of the 3-hydroxyl group of shikimic acid using ATP as a cosubstrate. The protein is Shikimate kinase of Desulforudis audaxviator (strain MP104C).